A 190-amino-acid chain; its full sequence is Probable RNA-binding protein 18 (190 aa).

Residues 25–106 form the RRM domain; it reads HRLWIGNLDP…KKLVVRWAHA (82 aa). A disordered region spans residues 166-190; the sequence is VYSYFKPPDKKRTTPYSRTAWKSRR.

In Bos taurus (Bovine), this protein is Probable RNA-binding protein 18 (RBM18).